A 307-amino-acid polypeptide reads, in one-letter code: Leucine-rich repeat-containing protein 59 (307 aa).

Met1 bears the N-acetylmethionine mark. Thr2 carries the N-acetylthreonine; in Leucine-rich repeat-containing protein 59, N-terminally processed modification. Residues 2–244 (TKTGSKGGNL…KPPPRKHNRS (243 aa)) lie on the Cytoplasmic side of the membrane. 5 LRR repeats span residues 10 to 31 (NLRDKLDGNELDLSLSDLNEVP), 40 to 62 (KATVLDLSCNKLSTLPSDFCGLT), 63 to 84 (HLVKLDLSKNKLQQLPADFGRL), 86 to 107 (NLQHLDLLNNRLVTLPVSFAQL), and 109 to 128 (NLKWLDLKDNPLDPVLAKVA). Phosphoserine is present on residues Ser23 and Ser25. At Lys73 the chain carries N6-succinyllysine. Lys135 carries the post-translational modification N6-acetyllysine. A coiled-coil region spans residues 148–216 (MKAVQADQER…KASKREQEKK (69 aa)). The tract at residues 150–242 (AVQADQERER…PRKPPPRKHN (93 aa)) is disordered. Residues 154–221 (DQERERQRRL…EQEKKPKKET (68 aa)) show a composition bias toward basic and acidic residues. A compositionally biased stretch (basic residues) spans 229 to 242 (SGSRPRKPPPRKHN). A helical transmembrane segment spans residues 245–265 (WAVLKGLLLLLLLCVAGGLVV). Over 266-307 (CRVTGLQQQPLCTSVNAIYDNAVQGLRHHEILQWVLQTDSQQ) the chain is Lumenal.

Can form homodimers. Interacts with SGO1. Interacts with FGF1.

It localises to the microsome membrane. The protein resides in the endoplasmic reticulum membrane. The protein localises to the nucleus envelope. In terms of biological role, required for nuclear import of FGF1, but not that of FGF2. Might regulate nuclear import of exogenous FGF1 by facilitating interaction with the nuclear import machinery and by transporting cytosolic FGF1 to, and possibly through, the nuclear pores. The protein is Leucine-rich repeat-containing protein 59 (Lrrc59) of Rattus norvegicus (Rat).